The primary structure comprises 64 residues: Large ribosomal subunit protein bL35c (64 aa).

This sequence belongs to the bacterial ribosomal protein bL35 family.

It is found in the plastid. Its subcellular location is the chloroplast. This chain is Large ribosomal subunit protein bL35c, found in Thalassiosira pseudonana (Marine diatom).